A 941-amino-acid polypeptide reads, in one-letter code: MPDHTTFAARHIGPDPQAVAAMLDVIGVGSLDELAAKAVPAGIRDRLSADGIAPGLDRLPPPASETEALAELRGLAEANTVAVSMIGQGYYDTLTPPVLLRNILENPAWYTAYTPYQPEISQGRLEALLNFQTMVADLTGLEIANASMLDEGTAAAEAMTLMRRASRGKSNRLAVDADVFAQTAAIVATRARPLGIEIVTADLRDGLPDGDFFGVIAQLPGASGAITDWAALVAQAHERGALVALGADLLALTLITPPGEIGADVAFGTTQRFGVPMGFGGPHAGYLAVHANHARQLPGRLVGVSLDADGSPAYRLALQTREQHIRRDKATSNICTAQVLLAVMAAMYASYHGAEGLTAIARRVHGHAEAIAAALGTAVVHDRYFDTVLARVPGRADEVIAAAKARGINLWRVDDDHVSVACDEATTDEHVAAVLEAFGVAPAEPVASEIATRTAEFLTHPAFTQYRTETAMMRYLRTLADKDIALDRSMIPLGSCTMKLNAAAEMEPITWPEFARQHPFAPASDTPGLRRLIGDLENWLVAITGYDAVSLQPNAGSQGEYAGLLAIHDYHASRGEPHRDICLIPSSAHGTNAASAALAGMRVVVVGCHDNGDVDLDDLRAKVTEHRDRLSTLMITYPSTHGVYEHDIAEICAAVHDAGGQVYVDGANLNALVGLARPGKFGGDVSHLNLHKTFCIPHGGGGPGVGPVAVRSHLAPFLPGHPHAPELPQGHPVSSAPYGSASILPISWAYIRMMGADGLRAASLTAITSANYIARRLDEYFPVLYTGENGMVAHECILDLRPITKATGVTVDDVAKRLADYGFHAPTMSFPVAGTLMVEPTESETLTEVDAFCDAMIAIRGEIDRVGAGEWPVEDNPLRGAPHTAECLVTTDWDHPYSREQAAYPLGKDFRPKVWPPVRRIDGAYGDRNLVCSCPPVEAFA.

Lys692 is modified (N6-(pyridoxal phosphate)lysine).

It belongs to the GcvP family. As to quaternary structure, the glycine cleavage system is composed of four proteins: P, T, L and H. The cofactor is pyridoxal 5'-phosphate.

It catalyses the reaction N(6)-[(R)-lipoyl]-L-lysyl-[glycine-cleavage complex H protein] + glycine + H(+) = N(6)-[(R)-S(8)-aminomethyldihydrolipoyl]-L-lysyl-[glycine-cleavage complex H protein] + CO2. Its function is as follows. The glycine cleavage system catalyzes the degradation of glycine. The P protein binds the alpha-amino group of glycine through its pyridoxal phosphate cofactor; CO(2) is released and the remaining methylamine moiety is then transferred to the lipoamide cofactor of the H protein. The protein is Glycine dehydrogenase (decarboxylating) of Mycolicibacterium paratuberculosis (strain ATCC BAA-968 / K-10) (Mycobacterium paratuberculosis).